Reading from the N-terminus, the 333-residue chain is MATSMLGSVRGPRPFGLANLFHRQPPRDAWERVRRLPGPSAVRRSVAAASGPGIPGSHLYCLELLRKRDYESYLCSLLFPAECQRSASALRAFNVELAQVKDSVSEKTIGLMRMQFWKKAVEDMYCDNPPHQPVAIELWKAVKKHNLTKRWLMRIIDEREKNLDDKAYRSMQELENYAENTQGSLLYLTLEVLGVKDLHADHAASHIGKAQGIVTCLRATPYHSSRRQVFLPMDVCVQHGVSQEDFLRRNQDKNVRDVVYDIASQAHLHLKHARSFHRSVPAEAFPAFLQTVSLEDYLKKIQRVDFDIFHPSLQQKNMLLPLSLYIQSWRKRY.

Residues 1–44 (MATSMLGSVRGPRPFGLANLFHRQPPRDAWERVRRLPGPSAVRR) constitute a mitochondrion transit peptide.

The protein belongs to the NDUFAF6 family.

Its subcellular location is the mitochondrion inner membrane. Its function is as follows. Involved in the assembly of mitochondrial NADH:ubiquinone oxidoreductase complex (complex I) at early stages. May play a role in the biogenesis of complex I subunit MT-ND1. In Mus musculus (Mouse), this protein is NADH dehydrogenase (ubiquinone) complex I, assembly factor 6 (Ndufaf6).